The chain runs to 926 residues: Serine/threonine-protein kinase/endoribonuclease IRE2 (926 aa).

An N-terminal signal peptide occupies residues 1-34 (MASAVRGSRPWPRLGLQLQFAALLLGTLSPQVHT). Residues 35–430 (LRPENLLLVS…TPDSYLGLGP (396 aa)) are Lumenal-facing. Residues 431-451 (QDLLAASLTAVLLGGWILFVM) traverse the membrane as a helical segment. Over 452–926 (RQQQPQVVEK…RRPCPGATGR (475 aa)) the chain is Cytoplasmic. Polar residues predominate over residues 478–501 (DAQSLHSGASRRSQKRLQSPSKQA). Residues 478–509 (DAQSLHSGASRRSQKRLQSPSKQAQPLDDPEA) are disordered. The region spanning 520 to 781 (FNPKDVLGRG…APQVLAHPFF (262 aa)) is the Protein kinase domain. ATP contacts are provided by residues 526–534 (LGRGAGGTF) and Lys548. Residue Asp637 is the Proton acceptor of the active site. The 129-residue stretch at 784–912 (RAKQLQFFQD…ESLFLPYYPP (129 aa)) folds into the KEN domain.

This sequence belongs to the protein kinase superfamily. Ser/Thr protein kinase family. Mg(2+) serves as cofactor. In terms of processing, autophosphorylated.

Its subcellular location is the endoplasmic reticulum membrane. The enzyme catalyses L-seryl-[protein] + ATP = O-phospho-L-seryl-[protein] + ADP + H(+). It carries out the reaction L-threonyl-[protein] + ATP = O-phospho-L-threonyl-[protein] + ADP + H(+). Its activity is regulated as follows. The kinase domain is activated by trans-autophosphorylation. Kinase activity is required for activation of the endoribonuclease domain. Functionally, induces translational repression through 28S ribosomal RNA cleavage in response to ER stress. Pro-apoptotic. Appears to play no role in the unfolded-protein response, unlike closely related proteins. This Homo sapiens (Human) protein is Serine/threonine-protein kinase/endoribonuclease IRE2.